Reading from the N-terminus, the 717-residue chain is Protein E2 homolog (717 aa).

This sequence belongs to the poxviridae E2 protein family.

This is Protein E2 homolog from Fowlpox virus (strain NVSL) (FPV).